Consider the following 245-residue polypeptide: 3-dehydroquinate dehydratase (245 aa).

3-dehydroquinate-binding positions include 35–37 (EFR) and R70. H132 serves as the catalytic Proton donor/acceptor. The Schiff-base intermediate with substrate role is filled by K158. 3-dehydroquinate contacts are provided by R199, T220, and Q224.

Belongs to the type-I 3-dehydroquinase family. Homodimer.

The catalysed reaction is 3-dehydroquinate = 3-dehydroshikimate + H2O. The protein operates within metabolic intermediate biosynthesis; chorismate biosynthesis; chorismate from D-erythrose 4-phosphate and phosphoenolpyruvate: step 3/7. Its function is as follows. Involved in the third step of the chorismate pathway, which leads to the biosynthesis of aromatic amino acids. Catalyzes the cis-dehydration of 3-dehydroquinate (DHQ) and introduces the first double bond of the aromatic ring to yield 3-dehydroshikimate. In Haloquadratum walsbyi (strain DSM 16790 / HBSQ001), this protein is 3-dehydroquinate dehydratase.